A 355-amino-acid chain; its full sequence is Thiamine thiazole synthase, chloroplastic (355 aa).

The N-terminal 42 residues, 1-42 (MAAMATTASSLLKTSFAGARLPAAARNPTVSVAPRTGGAICN), are a transit peptide targeting the chloroplast. Substrate contacts are provided by residues alanine 96, 116 to 117 (EQ), glycine 124, and valine 189. Cysteine 218 is modified (2,3-didehydroalanine (Cys)). Residues aspartate 220, histidine 235, methionine 287, and 297–299 (RMG) each bind substrate.

Belongs to the THI4 family. In terms of assembly, homooctamer. Requires Fe cation as cofactor. In terms of processing, during the catalytic reaction, a sulfide is transferred from Cys-218 to a reaction intermediate, generating a dehydroalanine residue.

It localises to the plastid. Its subcellular location is the chloroplast. The enzyme catalyses [ADP-thiazole synthase]-L-cysteine + glycine + NAD(+) = [ADP-thiazole synthase]-dehydroalanine + ADP-5-ethyl-4-methylthiazole-2-carboxylate + nicotinamide + 3 H2O + 2 H(+). Involved in biosynthesis of the thiamine precursor thiazole. Catalyzes the conversion of NAD and glycine to adenosine diphosphate 5-(2-hydroxyethyl)-4-methylthiazole-2-carboxylic acid (ADT), an adenylated thiazole intermediate. The reaction includes an iron-dependent sulfide transfer from a conserved cysteine residue of the protein to a thiazole intermediate. The enzyme can only undergo a single turnover, which suggests it is a suicide enzyme. May have additional roles in adaptation to various stress conditions and in DNA damage tolerance. Required fot thiamine accumulation and disease resistance toward the bacterial pathogen Xanthomonas oryzae pv oryzae (Xoo) and the fungal pathogen Magnaporthe oryzae. During infection by Xoo, functions positively in the defense pathway initiated by the resistance genes XA3 and XA26 by promoting thiamine synthesis. May function upstream of the defense-related proteins peroxidases, phenylalanine ammonia-lyases and pathogenesis-related proteins. Its function is as follows. (Microbial infection) During infection by Xanthomonas oryzae pv oryzae (Xoo), THI1 interacts with the type III effector virulence factor xadA from Xoo, which is an adhesin-like outer membrane protein. This probably attenuates the function of THI1 in defense response. The chain is Thiamine thiazole synthase, chloroplastic from Oryza sativa subsp. japonica (Rice).